We begin with the raw amino-acid sequence, 247 residues long: tRNA pseudouridine synthase A (247 aa).

The active-site Nucleophile is aspartate 53. Tyrosine 112 provides a ligand contact to substrate.

The protein belongs to the tRNA pseudouridine synthase TruA family. In terms of assembly, homodimer.

It catalyses the reaction uridine(38/39/40) in tRNA = pseudouridine(38/39/40) in tRNA. Its function is as follows. Formation of pseudouridine at positions 38, 39 and 40 in the anticodon stem and loop of transfer RNAs. The sequence is that of tRNA pseudouridine synthase A from Anaplasma marginale (strain Florida).